The primary structure comprises 493 residues: Cysteine sulfinic acid decarboxylase (493 aa).

N6-(pyridoxal phosphate)lysine is present on Lys-305.

It belongs to the group II decarboxylase family. Homodimer. Pyridoxal 5'-phosphate is required as a cofactor. As to expression, expressed in kidney and liver not detected in lymphoid tissues and lung. Expressed in kidney, liver and brain. 7 and 4 times higher expression in kidney and liver than in brain, respectively. Low level of detection in skeletal muscle. Expressed in brain, olfactory bulb, liver, skeletal muscle and kidney with the highest expression in liver and lowest in skeletal muscle (at protein level).

It catalyses the reaction L-aspartate + H(+) = beta-alanine + CO2. The enzyme catalyses 3-sulfino-L-alanine + H(+) = hypotaurine + CO2. The catalysed reaction is L-cysteate + H(+) = taurine + CO2. It functions in the pathway organosulfur biosynthesis; taurine biosynthesis; hypotaurine from L-cysteine: step 2/2. Its activity is regulated as follows. Activated by Mn(2+). Inhibited by bis-carboxymethyl-trithiocarbonate, ethylxanthogenacetic acid and 2,5-disulfoaniline. Not affected by Li(+) within 0.05-40 mM concentration range. Its function is as follows. Catalyzes the decarboxylation of L-aspartate, 3-sulfino-L-alanine (cysteine sulfinic acid), and L-cysteate to beta-alanine, hypotaurine and taurine, respectively. The preferred substrate is 3-sulfino-L-alanine. Does not exhibit any decarboxylation activity toward glutamate. The chain is Cysteine sulfinic acid decarboxylase from Mus musculus (Mouse).